Reading from the N-terminus, the 438-residue chain is Glucose-6-phosphate isomerase (438 aa).

The active-site Proton donor is Glu289. Residues His310 and Lys424 contribute to the active site.

It belongs to the GPI family.

The protein localises to the cytoplasm. It catalyses the reaction alpha-D-glucose 6-phosphate = beta-D-fructose 6-phosphate. The protein operates within carbohydrate biosynthesis; gluconeogenesis. Its pathway is carbohydrate degradation; glycolysis; D-glyceraldehyde 3-phosphate and glycerone phosphate from D-glucose: step 2/4. Functionally, catalyzes the reversible isomerization of glucose-6-phosphate to fructose-6-phosphate. The protein is Glucose-6-phosphate isomerase of Oenococcus oeni (strain ATCC BAA-331 / PSU-1).